A 141-amino-acid polypeptide reads, in one-letter code: Large ribosomal subunit protein uL11 (141 aa).

Belongs to the universal ribosomal protein uL11 family. Part of the ribosomal stalk of the 50S ribosomal subunit. Interacts with L10 and the large rRNA to form the base of the stalk. L10 forms an elongated spine to which L12 dimers bind in a sequential fashion forming a multimeric L10(L12)X complex. In terms of processing, one or more lysine residues are methylated.

In terms of biological role, forms part of the ribosomal stalk which helps the ribosome interact with GTP-bound translation factors. The chain is Large ribosomal subunit protein uL11 from Ligilactobacillus salivarius (strain UCC118) (Lactobacillus salivarius).